We begin with the raw amino-acid sequence, 386 residues long: Succinate--CoA ligase [ADP-forming] subunit beta (386 aa).

Positions 9–244 (KEILRSFGVP…LDEEDPAEVE (236 aa)) constitute an ATP-grasp domain. ATP-binding positions include Lys-46, 53-55 (GRG), Glu-99, Ala-102, and Glu-107. Mg(2+)-binding residues include Asn-199 and Asp-213. Substrate-binding positions include Asn-264 and 321 to 323 (GIM).

This sequence belongs to the succinate/malate CoA ligase beta subunit family. As to quaternary structure, heterotetramer of two alpha and two beta subunits. Mg(2+) serves as cofactor.

It catalyses the reaction succinate + ATP + CoA = succinyl-CoA + ADP + phosphate. The enzyme catalyses GTP + succinate + CoA = succinyl-CoA + GDP + phosphate. The protein operates within carbohydrate metabolism; tricarboxylic acid cycle; succinate from succinyl-CoA (ligase route): step 1/1. Its function is as follows. Succinyl-CoA synthetase functions in the citric acid cycle (TCA), coupling the hydrolysis of succinyl-CoA to the synthesis of either ATP or GTP and thus represents the only step of substrate-level phosphorylation in the TCA. The beta subunit provides nucleotide specificity of the enzyme and binds the substrate succinate, while the binding sites for coenzyme A and phosphate are found in the alpha subunit. The sequence is that of Succinate--CoA ligase [ADP-forming] subunit beta from Acidovorax ebreus (strain TPSY) (Diaphorobacter sp. (strain TPSY)).